Consider the following 1462-residue polypeptide: Gag-Pol polyprotein (1462 aa).

G2 is lipidated: N-myristoyl glycine; by host. The Nuclear export signal signature appears at 16 to 22 (WESIRLK). A Nuclear localization signal motif is present at residues 26 to 32 (RKKYLIK). Polar residues-rich tracts occupy residues 113–125 (NNST…QRQN) and 135–151 (PSGN…TPSG). A disordered region spans residues 113–153 (NNSTATSSGQRQNAGEKEETVPPSGNTGNTGRATETPSGSR). Phosphotyrosine; by host is present on Y155. 2 consecutive CCHC-type zinc fingers follow at residues 417–434 (LQCF…NCRA) and 438–455 (KGCW…DCTT). The interval 482–513 (EHPREREGSGAGDSTDTSGANCPTTGDDDERR) is disordered. One can recognise a Peptidase A2 domain in the interval 535–604 (CQALLDTGAD…TPINIIGRNI (70 aa)). The active-site For protease activity; shared with dimeric partner is the D540. The Reverse transcriptase domain maps to 658–848 (EGKISAVGPE…PPFMWMGYEL (191 aa)). Positions 724, 799, and 800 each coordinate Mg(2+). Positions 841-849 (FMWMGYELH) are RT 'primer grip'. The Tryptophan repeat motif signature appears at 1012–1028 (WSQWWTDYWQVTWVPEW). The 124-residue stretch at 1048 to 1171 (IPEAETFYVD…VDKLVSKNIR (124 aa)) folds into the RNase H type-1 domain. Residues D1057, E1092, D1112, and D1163 each coordinate Mg(2+). An Integrase-type zinc finger spans residues 1177-1218 (DGINEAQEDHDKYHSNWKALADEYNLPPVVAKEIIAQCPKCH). Residues H1186, H1190, C1214, and C1217 each coordinate Zn(2+). One can recognise an Integrase catalytic domain in the interval 1228-1378 (VDYSPEIWQI…TAGERLLDIL (151 aa)). Residues D1238 and D1290 each coordinate Mg(2+). The integrase-type DNA-binding region spans 1397-1444 (FRVYYRDARDPIWKGPARLLWKGEGAVVIKEGEDIKVVPRRKAKIIKE).

In terms of assembly, homotrimer. Interacts with gp41 (via C-terminus). Homodimer. The active site consists of two apposed aspartic acid residues. As to quaternary structure, heterodimer of p66 RT and p51 RT (RT p66/p51). Heterodimerization of RT is essential for DNA polymerase activity. Despite the sequence identities, p66 RT and p51 RT have distinct folding. In terms of assembly, homotetramer; may further associate as a homohexadecamer. Mg(2+) is required as a cofactor. Specific enzymatic cleavages by the viral protease yield mature proteins. The protease is released by autocatalytic cleavage. The polyprotein is cleaved during and after budding, this process is termed maturation. Proteolytic cleavage of p66 RT removes the RNase H domain to yield the p51 RT subunit. In terms of processing, capsid protein p24 is phosphorylated.

Its subcellular location is the virion. It is found in the host nucleus. The protein resides in the host cytoplasm. The protein localises to the host cell membrane. It carries out the reaction Specific for a P1 residue that is hydrophobic, and P1' variable, but often Pro.. The enzyme catalyses Endohydrolysis of RNA in RNA/DNA hybrids. Three different cleavage modes: 1. sequence-specific internal cleavage of RNA. Human immunodeficiency virus type 1 and Moloney murine leukemia virus enzymes prefer to cleave the RNA strand one nucleotide away from the RNA-DNA junction. 2. RNA 5'-end directed cleavage 13-19 nucleotides from the RNA end. 3. DNA 3'-end directed cleavage 15-20 nucleotides away from the primer terminus.. The catalysed reaction is 3'-end directed exonucleolytic cleavage of viral RNA-DNA hybrid.. It catalyses the reaction DNA(n) + a 2'-deoxyribonucleoside 5'-triphosphate = DNA(n+1) + diphosphate. With respect to regulation, the viral protease is inhibited by many synthetic protease inhibitors (PIs), such as amprenavir, atazanavir, indinavir, loprinavir, nelfinavir, ritonavir and saquinavir. RT can be inhibited either by nucleoside RT inhibitors (NRTIs) or by non nucleoside RT inhibitors (NNRTIs). NRTIs act as chain terminators, whereas NNRTIs inhibit DNA polymerization by binding a small hydrophobic pocket near the RT active site and inducing an allosteric change in this region. Classical NRTIs are abacavir, adefovir (PMEA), didanosine (ddI), lamivudine (3TC), stavudine (d4T), tenofovir (PMPA), zalcitabine (ddC), and zidovudine (AZT). Classical NNRTIs are atevirdine (BHAP U-87201E), delavirdine, efavirenz (DMP-266), emivirine (I-EBU), and nevirapine (BI-RG-587). The tritherapies used as a basic effective treatment of AIDS associate two NRTIs and one NNRTI. Use of protease inhibitors in tritherapy regimens permit more ambitious therapeutic strategies. Gag-Pol polyprotein and Gag polyprotein may regulate their own translation, by the binding genomic RNA in the 5'-UTR. At low concentration, Gag-Pol and Gag would promote translation, whereas at high concentration, the polyproteins encapsidate genomic RNA and then shut off translation. In terms of biological role, matrix protein p17 has two main functions: in infected cell, it targets Gag and Gag-pol polyproteins to the plasma membrane via a multipartite membrane-binding signal, that includes its myristointegration complex. The myristoylation signal and the NLS exert conflicting influences its subcellular localization. The key regulation of these motifs might be phosphorylation of a portion of MA molecules on the C-terminal tyrosine at the time of virus maturation, by virion-associated cellular tyrosine kinase. Implicated in the release from host cell mediated by Vpu. Its function is as follows. Capsid protein p24 forms the conical core that encapsulates the genomic RNA-nucleocapsid complex in the virion. The core is constituted by capsid protein hexamer subunits. The core is disassembled soon after virion entry. Interaction with host PPIA/CYPA protects the virus from restriction by host TRIM5-alpha and from an unknown antiviral activity in host cells. This capsid restriction by TRIM5 is one of the factors which restricts SIV to the simian species. Functionally, nucleocapsid protein p7 encapsulates and protects viral dimeric unspliced (genomic) RNA. Binds these RNAs through its zinc fingers. Facilitates rearangement of nucleic acid secondary structure during retrotranscription of genomic RNA. This capability is referred to as nucleic acid chaperone activity. The aspartyl protease mediates proteolytic cleavages of Gag and Gag-Pol polyproteins during or shortly after the release of the virion from the plasma membrane. Cleavages take place as an ordered, step-wise cascade to yield mature proteins. This process is called maturation. Displays maximal activity during the budding process just prior to particle release from the cell. Also cleaves Nef and Vif, probably concomitantly with viral structural proteins on maturation of virus particles. Hydrolyzes host EIF4GI and PABP1 in order to shut off the capped cellular mRNA translation. The resulting inhibition of cellular protein synthesis serves to ensure maximal viral gene expression and to evade host immune response. In terms of biological role, reverse transcriptase/ribonuclease H (RT) is a multifunctional enzyme that converts the viral dimeric RNA genome into dsDNA in the cytoplasm, shortly after virus entry into the cell. This enzyme displays a DNA polymerase activity that can copy either DNA or RNA templates, and a ribonuclease H (RNase H) activity that cleaves the RNA strand of RNA-DNA heteroduplexes in a partially processive 3' to 5' endonucleasic mode. Conversion of viral genomic RNA into dsDNA requires many steps. A tRNA binds to the primer-binding site (PBS) situated at the 5'-end of the viral RNA. RT uses the 3' end of the tRNA primer to perform a short round of RNA-dependent minus-strand DNA synthesis. The reading proceeds through the U5 region and ends after the repeated (R) region which is present at both ends of viral RNA. The portion of the RNA-DNA heteroduplex is digested by the RNase H, resulting in a ssDNA product attached to the tRNA primer. This ssDNA/tRNA hybridizes with the identical R region situated at the 3' end of viral RNA. This template exchange, known as minus-strand DNA strong stop transfer, can be either intra- or intermolecular. RT uses the 3' end of this newly synthesized short ssDNA to perform the RNA-dependent minus-strand DNA synthesis of the whole template. RNase H digests the RNA template except for two polypurine tracts (PPTs) situated at the 5'-end and near the center of the genome. It is not clear if both polymerase and RNase H activities are simultaneous. RNase H can probably proceed both in a polymerase-dependent (RNA cut into small fragments by the same RT performing DNA synthesis) and a polymerase-independent mode (cleavage of remaining RNA fragments by free RTs). Secondly, RT performs DNA-directed plus-strand DNA synthesis using the PPTs that have not been removed by RNase H as primers. PPTs and tRNA primers are then removed by RNase H. The 3' and 5' ssDNA PBS regions hybridize to form a circular dsDNA intermediate. Strand displacement synthesis by RT to the PBS and PPT ends produces a blunt ended, linear dsDNA copy of the viral genome that includes long terminal repeats (LTRs) at both ends. Its function is as follows. Integrase catalyzes viral DNA integration into the host chromosome, by performing a series of DNA cutting and joining reactions. This enzyme activity takes place after virion entry into a cell and reverse transcription of the RNA genome in dsDNA. The first step in the integration process is 3' processing. This step requires a complex comprising the viral genome, matrix protein, Vpr and integrase. This complex is called the pre-integration complex (PIC). The integrase protein removes 2 nucleotides from each 3' end of the viral DNA, leaving recessed CA OH's at the 3' ends. In the second step, the PIC enters cell nucleus. This process is mediated through integrase and Vpr proteins, and allows the virus to infect a non dividing cell. This ability to enter the nucleus is specific of lentiviruses, other retroviruses cannot and rely on cell division to access cell chromosomes. In the third step, termed strand transfer, the integrase protein joins the previously processed 3' ends to the 5' ends of strands of target cellular DNA at the site of integration. The 5'-ends are produced by integrase-catalyzed staggered cuts, 5 bp apart. A Y-shaped, gapped, recombination intermediate results, with the 5'-ends of the viral DNA strands and the 3' ends of target DNA strands remaining unjoined, flanking a gap of 5 bp. The last step is viral DNA integration into host chromosome. This involves host DNA repair synthesis in which the 5 bp gaps between the unjoined strands are filled in and then ligated. Since this process occurs at both cuts flanking the SIV genome, a 5 bp duplication of host DNA is produced at the ends of SIV integration. Alternatively, Integrase may catalyze the excision of viral DNA just after strand transfer, this is termed disintegration. The protein is Gag-Pol polyprotein (gag-pol) of Simian immunodeficiency virus (isolate TAN1) (SIV-cpz).